Reading from the N-terminus, the 247-residue chain is Probable transcriptional regulatory protein YebC (247 aa).

The interval 1-20 is disordered; that stretch reads MAGHSKWANTRHRKAAQDAK.

Belongs to the TACO1 family.

It is found in the cytoplasm. The chain is Probable transcriptional regulatory protein YebC from Salmonella arizonae (strain ATCC BAA-731 / CDC346-86 / RSK2980).